The following is a 310-amino-acid chain: Mitochondrial thiamine pyrophosphate carrier 1 (310 aa).

A run of 6 helical transmembrane segments spans residues 16–32 (VSPYESLFAGSVSGGVA), 88–104 (ILYVMYGAVQFTTYSAL), 117–141 (IVMPSSVHSLLAGVGAGIASTLTTY), 173–197 (GISGLFAGIRPAMISVASTTGLMFW), 218–234 (ICGFVAGATSKGITFPL), and 274–291 (GYGVSILKTAPTSAISLW). Solcar repeat units lie at residues 16-107 (VSPY…LSKS), 120-205 (PSSV…AREF), and 211-299 (HVPF…VISA).

It belongs to the mitochondrial carrier (TC 2.A.29) family.

It localises to the mitochondrion inner membrane. Its function is as follows. Mitochondrial transporter that mediates uptake of thiamine pyrophosphate (ThPP) into mitochondria. The chain is Mitochondrial thiamine pyrophosphate carrier 1 (TPC1) from Lodderomyces elongisporus (strain ATCC 11503 / CBS 2605 / JCM 1781 / NBRC 1676 / NRRL YB-4239) (Yeast).